The chain runs to 341 residues: DNA-directed RNA polymerase subunit alpha (341 aa).

The tract at residues 1-233 (MVREEVAGST…DLFLPFLHAE (233 aa)) is alpha N-terminal domain (alpha-NTD). The interval 269–341 (IPLNCIFIDQ…IDLLKNKLSF (73 aa)) is alpha C-terminal domain (alpha-CTD).

It belongs to the RNA polymerase alpha chain family. In terms of assembly, in plastids the minimal PEP RNA polymerase catalytic core is composed of four subunits: alpha, beta, beta', and beta''. When a (nuclear-encoded) sigma factor is associated with the core the holoenzyme is formed, which can initiate transcription.

It localises to the plastid. It is found in the chloroplast. It carries out the reaction RNA(n) + a ribonucleoside 5'-triphosphate = RNA(n+1) + diphosphate. Functionally, DNA-dependent RNA polymerase catalyzes the transcription of DNA into RNA using the four ribonucleoside triphosphates as substrates. The sequence is that of DNA-directed RNA polymerase subunit alpha from Lolium perenne (Perennial ryegrass).